Reading from the N-terminus, the 381-residue chain is Dual-specificity RNA methyltransferase RlmN (381 aa).

Glu96 serves as the catalytic Proton acceptor. Residues 102–342 form the Radical SAM core domain; it reads TDDRGTLCVS…TRTTRGDDID (241 aa). Cys109 and Cys345 are disulfide-bonded. [4Fe-4S] cluster contacts are provided by Cys116, Cys120, and Cys123. Residues 170 to 171, Ser202, 224 to 226, and Asn302 contribute to the S-adenosyl-L-methionine site; these read GE and SLH. Cys345 serves as the catalytic S-methylcysteine intermediate.

It belongs to the radical SAM superfamily. RlmN family. [4Fe-4S] cluster is required as a cofactor.

The protein resides in the cytoplasm. The enzyme catalyses adenosine(2503) in 23S rRNA + 2 reduced [2Fe-2S]-[ferredoxin] + 2 S-adenosyl-L-methionine = 2-methyladenosine(2503) in 23S rRNA + 5'-deoxyadenosine + L-methionine + 2 oxidized [2Fe-2S]-[ferredoxin] + S-adenosyl-L-homocysteine. It catalyses the reaction adenosine(37) in tRNA + 2 reduced [2Fe-2S]-[ferredoxin] + 2 S-adenosyl-L-methionine = 2-methyladenosine(37) in tRNA + 5'-deoxyadenosine + L-methionine + 2 oxidized [2Fe-2S]-[ferredoxin] + S-adenosyl-L-homocysteine. Specifically methylates position 2 of adenine 2503 in 23S rRNA and position 2 of adenine 37 in tRNAs. m2A2503 modification seems to play a crucial role in the proofreading step occurring at the peptidyl transferase center and thus would serve to optimize ribosomal fidelity. The chain is Dual-specificity RNA methyltransferase RlmN from Pseudomonas putida (strain W619).